A 306-amino-acid chain; its full sequence is Curved DNA-binding protein (306 aa).

The J domain maps to 5-69; sequence DYYAIMGVKP…QRRAEYDQMW (65 aa).

It is found in the cytoplasm. It localises to the nucleoid. Its function is as follows. DNA-binding protein that preferentially recognizes a curved DNA sequence. It is probably a functional analog of DnaJ; displays overlapping activities with DnaJ, but functions under different conditions, probably acting as a molecular chaperone in an adaptive response to environmental stresses other than heat shock. Lacks autonomous chaperone activity; binds native substrates and targets them for recognition by DnaK. Its activity is inhibited by the binding of CbpM. This is Curved DNA-binding protein from Escherichia coli (strain SMS-3-5 / SECEC).